A 103-amino-acid polypeptide reads, in one-letter code: Large ribosomal subunit protein bL21 (103 aa).

The protein belongs to the bacterial ribosomal protein bL21 family. In terms of assembly, part of the 50S ribosomal subunit. Contacts protein L20.

Functionally, this protein binds to 23S rRNA in the presence of protein L20. This Nitrosospira multiformis (strain ATCC 25196 / NCIMB 11849 / C 71) protein is Large ribosomal subunit protein bL21.